The following is a 468-amino-acid chain: 3-isopropylmalate dehydratase large subunit (468 aa).

3 residues coordinate [4Fe-4S] cluster: Cys347, Cys407, and Cys410.

Belongs to the aconitase/IPM isomerase family. LeuC type 1 subfamily. As to quaternary structure, heterodimer of LeuC and LeuD. [4Fe-4S] cluster is required as a cofactor.

The enzyme catalyses (2R,3S)-3-isopropylmalate = (2S)-2-isopropylmalate. It functions in the pathway amino-acid biosynthesis; L-leucine biosynthesis; L-leucine from 3-methyl-2-oxobutanoate: step 2/4. Its function is as follows. Catalyzes the isomerization between 2-isopropylmalate and 3-isopropylmalate, via the formation of 2-isopropylmaleate. The polypeptide is 3-isopropylmalate dehydratase large subunit (Synechococcus elongatus (strain ATCC 33912 / PCC 7942 / FACHB-805) (Anacystis nidulans R2)).